A 423-amino-acid chain; its full sequence is Flotillin-1 (423 aa).

This sequence belongs to the band 7/mec-2 family. Flotillin subfamily. As to quaternary structure, heterooligomeric complex of flotillin-1 and flotillin-2 and caveolin-1 and caveolin-2. Normally expressed in growing retinal exons of newly differentiated ganglion cells at the retinal margin. After optic nerve injury, expressed in all retinal ganglion cells and retinal axons. Also expressed in endothelial cells, spinal cord, larval and adult skin, muscle processes, thymus and gill macrophages.

It localises to the cell membrane. The protein localises to the endosome. It is found in the membrane. The protein resides in the caveola. Its subcellular location is the melanosome. It localises to the membrane raft. Its function is as follows. May act as a scaffolding protein within caveolar membranes, functionally participating in formation of caveolae or caveolae-like vesicles. The protein is Flotillin-1 (flot1) of Carassius auratus (Goldfish).